The following is a 238-amino-acid chain: DNA damage-regulated autophagy modulator protein 1 (238 aa).

A run of 6 helical transmembrane segments spans residues 9–29 (AFVP…SYVV), 53–73 (SGIF…TMYT), 91–111 (VFNL…GIVA), 116–136 (LAVP…GVVY), 161–181 (MAIS…ASLI), and 200–220 (VSAI…LTFI).

This sequence belongs to the DRAM/TMEM150 family.

It is found in the lysosome membrane. In terms of biological role, lysosomal modulator of autophagy that plays a central role in p53/TP53-mediated apoptosis. Not involved in p73/TP73-mediated autophagy. This is DNA damage-regulated autophagy modulator protein 1 (Dram1) from Mus musculus (Mouse).